The primary structure comprises 362 residues: 3-isopropylmalate dehydrogenase (362 aa).

78–91 (GPKWESLPPDEQPE) is a binding site for NAD(+). Substrate contacts are provided by Arg-99, Arg-109, Arg-138, and Asp-227. Mg(2+)-binding residues include Asp-227, Asp-251, and Asp-255. Residue 285-297 (GSAPDIAGQGIAN) participates in NAD(+) binding.

This sequence belongs to the isocitrate and isopropylmalate dehydrogenases family. LeuB type 1 subfamily. Homodimer. The cofactor is Mg(2+). Mn(2+) serves as cofactor.

It localises to the cytoplasm. It carries out the reaction (2R,3S)-3-isopropylmalate + NAD(+) = 4-methyl-2-oxopentanoate + CO2 + NADH. It functions in the pathway amino-acid biosynthesis; L-leucine biosynthesis; L-leucine from 3-methyl-2-oxobutanoate: step 3/4. Catalyzes the oxidation of 3-carboxy-2-hydroxy-4-methylpentanoate (3-isopropylmalate) to 3-carboxy-4-methyl-2-oxopentanoate. The product decarboxylates to 4-methyl-2 oxopentanoate. The sequence is that of 3-isopropylmalate dehydrogenase from Geobacter sulfurreducens (strain ATCC 51573 / DSM 12127 / PCA).